Reading from the N-terminus, the 87-residue chain is Conotoxin Bt15a (87 aa).

A signal peptide spans 1–23 (MEKLTILVLVATVLLAIQVLVQS). Positions 24–49 (DGEKPLKRRVKQYAAKRLSALMRGPR) are excised as a propeptide. At Gln50 the chain carries Pyrrolidone carboxylic acid.

It belongs to the conotoxin O2 superfamily. Contains 4 disulfide bonds. Expressed by the venom duct.

It is found in the secreted. The protein is Conotoxin Bt15a of Conus betulinus (Beech cone).